Reading from the N-terminus, the 208-residue chain is LexA repressor (208 aa).

Residues 30-50 (VREICAAVKLSSTSTVHGHLA) constitute a DNA-binding region (H-T-H motif). Active-site for autocatalytic cleavage activity residues include serine 129 and lysine 167.

This sequence belongs to the peptidase S24 family. In terms of assembly, homodimer.

It catalyses the reaction Hydrolysis of Ala-|-Gly bond in repressor LexA.. Functionally, represses a number of genes involved in the response to DNA damage (SOS response), including recA and lexA. In the presence of single-stranded DNA, RecA interacts with LexA causing an autocatalytic cleavage which disrupts the DNA-binding part of LexA, leading to derepression of the SOS regulon and eventually DNA repair. The protein is LexA repressor of Lactobacillus helveticus (strain DPC 4571).